Consider the following 1343-residue polypeptide: MVYSYSEKKRIRKDFGKRPRVLDIPYLLSIQLDSFKKFTDQDPTGERGFEAAFRSVFPIKSFSGNSELQYVSYKLGEPVFDVKECQIRGVTYSAPLRVKLRMVLYDREAAPGTVKDIKEQEVYMGDIPLMTDNGTFVINGTERVIVSQLHRSPGVFFDHDRGKTHSSGKVLYNARIIPYRGSWLDFEFDPKDALFVRIDRRRKLAASIILRALDYSTQDILDLFFDRVNFKIKKDSLVMDLVADRLRGETASYDIKDAEGTVLVEKGRRITARHIRQLEKTNTTELEVPVEYIAGKISGQDYIDPDTGEVLVSANADISLEDLAKLSMAGIKEISTLYINELDNGAYISDTLRIDSTTNRLEALVEIYRMMRPGEPPTKDAAEALFNNLFFSEERYDLSKVGRMKFNRRLSIDDDEGTGILSKEDIVAVMKNIIAIRNGFDEVDDIDHLGNRRIRSVGEMAENQFRVGLVRVERAVRERLSLGDLNELMPQDLINAKPISAAVKEFFGSSQLSQFMDQNNPLSEVTHKRRISALGPGGLTRERAGFEVRDVHPTHYGRLCPIETPEGPNIGLINSLSTFARTNNYGFLETPYRKVIDGVVTDEVDYLSAIEEGRYVIAQAIVQLDENGRMMDELIACRHKGDSTFMGAADIQYMDVSPQQIISVAASLIPFLEHDDANRALMGANMQRQAVPTLKADKPLVGTGIERTLAVDSGVVVAAKRGGYVDYVDASRIVVKVNEAELTPGEAGIDIYNLTKYTRSNQNTCINQRPCCSVGDPIVRGDVLADGPSTDLGDLALGQNMRIAFMPWNGYNFEDSILISERVAQEDRFTTIHIQELSCIARDTKLGSEEITADIPNVGESALSKLDESGIVYIGAEVKGGDILVGKVTPKGETQLTPEEKLLRAIFGEKASDVKDSSLRVPNSVKGTIIDVQVFTRDGVEKDKRAVEIEEMHIAQAKKDLTEEFQILEDGVIGRARNLLIGAGFDEAQLAAIPRSQLLVQTIDDEVKQTELEQLAEQAEELKADFDKKFEIKRRKITQGDDLAPGVLKIVKVYLAVKRTIQPGDKMAGRHGNKGVISKICPVEDMPYDEKGNPVDIVLNPLGVPSRMNIGQVLEVHMGAAAKGIGNRITEMLEEQRELAELRGYIKQVYELGDEVIQKVDIDSFTDDEILRLAKNLKGGVPIATPAFDGAKEKEIKQMLELAGLPQSGQLTLIDGRTGNEFERKVTVGYMYMLKLNHLVDDKMHARSTGSYSLVTQQPLGGKAQFGGQRFGEMEVWALEAYGAAYTLQEMLTVKSDDVNGRTQMYKNIVDGNHQMQPGMPESFNVLLKEIRSLGINIELDTK.

The protein belongs to the RNA polymerase beta chain family. As to quaternary structure, the RNAP catalytic core consists of 2 alpha, 1 beta, 1 beta' and 1 omega subunit. When a sigma factor is associated with the core the holoenzyme is formed, which can initiate transcription.

It catalyses the reaction RNA(n) + a ribonucleoside 5'-triphosphate = RNA(n+1) + diphosphate. In terms of biological role, DNA-dependent RNA polymerase catalyzes the transcription of DNA into RNA using the four ribonucleoside triphosphates as substrates. In Shewanella pealeana (strain ATCC 700345 / ANG-SQ1), this protein is DNA-directed RNA polymerase subunit beta.